The chain runs to 459 residues: Endoglucanase CelA (459 aa).

Residues M1 to A27 form the signal peptide. Residues A28–S134 form the CBM2 domain. C31 and C131 form a disulfide bridge. Positions A129–T151 are disordered. The linker ('hinge') (Pro-Thr box) stretch occupies residues T136–P147. The interval A148–H357 is catalytic. E286 acts as the Proton donor in catalysis. E378 serves as the catalytic Nucleophile.

It belongs to the glycosyl hydrolase 5 (cellulase A) family. Post-translationally, the linker region (also termed 'hinge') may be a potential site for proteolysis.

It catalyses the reaction Endohydrolysis of (1-&gt;4)-beta-D-glucosidic linkages in cellulose, lichenin and cereal beta-D-glucans.. In Streptomyces lividans, this protein is Endoglucanase CelA (celA).